Consider the following 128-residue polypeptide: Glycine cleavage system H protein (128 aa).

Positions 22–104 constitute a Lipoyl-binding domain; that stretch reads TVLVGITDYA…YGEGWIFRLK (83 aa). An N6-lipoyllysine modification is found at K63.

It belongs to the GcvH family. In terms of assembly, the glycine cleavage system is composed of four proteins: P, T, L and H. The cofactor is (R)-lipoate.

In terms of biological role, the glycine cleavage system catalyzes the degradation of glycine. The H protein shuttles the methylamine group of glycine from the P protein to the T protein. The sequence is that of Glycine cleavage system H protein from Thermus thermophilus (strain ATCC BAA-163 / DSM 7039 / HB27).